The following is a 74-amino-acid chain: uncharacterized protein (74 aa).

This is an uncharacterized protein from Enterobacteria phage T4 (Bacteriophage T4).